The primary structure comprises 191 residues: Protein Ves (191 aa).

The protein belongs to the Ves family.

This Escherichia coli O127:H6 (strain E2348/69 / EPEC) protein is Protein Ves.